Reading from the N-terminus, the 546-residue chain is Chaperonin GroEL 2 (546 aa).

ATP contacts are provided by residues 30–33 (TLGP), K51, 87–91 (DGTTT), G415, 479–481 (NAA), and D495. The disordered stretch occupies residues 526 to 546 (KEDAPMPGGMPGGMGGMGMDM). Over residues 534-546 (GMPGGMGGMGMDM) the composition is skewed to gly residues.

Belongs to the chaperonin (HSP60) family. Forms a cylinder of 14 subunits composed of two heptameric rings stacked back-to-back. Interacts with the co-chaperonin GroES.

The protein localises to the cytoplasm. It catalyses the reaction ATP + H2O + a folded polypeptide = ADP + phosphate + an unfolded polypeptide.. In terms of biological role, together with its co-chaperonin GroES, plays an essential role in assisting protein folding. The GroEL-GroES system forms a nano-cage that allows encapsulation of the non-native substrate proteins and provides a physical environment optimized to promote and accelerate protein folding. The chain is Chaperonin GroEL 2 from Burkholderia lata (strain ATCC 17760 / DSM 23089 / LMG 22485 / NCIMB 9086 / R18194 / 383).